We begin with the raw amino-acid sequence, 123 residues long: Small ribosomal subunit protein uS12 (123 aa).

Residues 1–22 form a disordered region; sequence MATINQLVRQPRKRSVEKSDVP. Position 89 is a 3-methylthioaspartic acid (Asp89). Residues 100-123 form a disordered region; the sequence is GSLDTSGVKGRNQGRSKYGTKRPK. The span at 111–123 shows a compositional bias: basic residues; the sequence is NQGRSKYGTKRPK.

It belongs to the universal ribosomal protein uS12 family. In terms of assembly, part of the 30S ribosomal subunit. Contacts proteins S8 and S17. May interact with IF1 in the 30S initiation complex.

With S4 and S5 plays an important role in translational accuracy. Functionally, interacts with and stabilizes bases of the 16S rRNA that are involved in tRNA selection in the A site and with the mRNA backbone. Located at the interface of the 30S and 50S subunits, it traverses the body of the 30S subunit contacting proteins on the other side and probably holding the rRNA structure together. The combined cluster of proteins S8, S12 and S17 appears to hold together the shoulder and platform of the 30S subunit. The polypeptide is Small ribosomal subunit protein uS12 (Pseudomonas entomophila (strain L48)).